The primary structure comprises 148 residues: Large ribosomal subunit protein uL22c (148 aa).

This sequence belongs to the universal ribosomal protein uL22 family. Part of the 50S ribosomal subunit.

The protein resides in the plastid. Its subcellular location is the chloroplast. In terms of biological role, this protein binds specifically to 23S rRNA. Functionally, the globular domain of the protein is located near the polypeptide exit tunnel on the outside of the subunit, while an extended beta-hairpin is found that lines the wall of the exit tunnel in the center of the 70S ribosome. This Zea mays (Maize) protein is Large ribosomal subunit protein uL22c (rpl22).